A 246-amino-acid polypeptide reads, in one-letter code: Ly6/PLAUR domain-containing protein 4 (246 aa).

A signal peptide spans 1–26 (MGPQHLSPMQLLCLLGAISSLPWAEA). N-linked (GlcNAc...) asparagine glycosylation is present at N117. In terms of domain architecture, UPAR/Ly6 spans 142-223 (CPTCVGEHSK…INIVEKALFT (82 aa)). A225 carries GPI-anchor amidated alanine lipidation. The propeptide at 226-246 (GTPCRSPSWGILLGLLFAFKG) is removed in mature form.

It is found in the cell membrane. This chain is Ly6/PLAUR domain-containing protein 4 (LYPD4), found in Bos taurus (Bovine).